The following is a 454-amino-acid chain: Transmembrane protein adipocyte-associated 1 homolog (454 aa).

N-linked (GlcNAc...) asparagine glycans are attached at residues Asn-26 and Asn-44. 5 helical membrane passes run 80-100, 113-133, 151-171, 180-200, and 224-244; these read AILI…TSVI, AFTL…VYSM, IIIK…GLLF, ILIA…VQVI, and FVFW…IMCL. N-linked (GlcNAc...) asparagine glycosylation occurs at Asn-258. 2 helical membrane-spanning segments follow: residues 262–282 and 290–310; these read FIYC…AALI and LCFV…IIYF. N-linked (GlcNAc...) asparagine glycans are attached at residues Asn-322 and Asn-323. The interval 408 to 454 is disordered; the sequence is RTGSDDFAHHRDSMLSEPSTGTTTRHLKGLGPQGSLVFEEDPSSLRL. Positions 410-421 are enriched in basic and acidic residues; the sequence is GSDDFAHHRDSM. Positions 445–454 are enriched in acidic residues; that stretch reads FEEDPSSLRL.

It belongs to the UPF0359 family.

It localises to the membrane. This chain is Transmembrane protein adipocyte-associated 1 homolog (tpra-1), found in Caenorhabditis briggsae.